Here is a 184-residue protein sequence, read N- to C-terminus: Ribosome-recycling factor (184 aa).

It belongs to the RRF family.

It is found in the cytoplasm. Functionally, responsible for the release of ribosomes from messenger RNA at the termination of protein biosynthesis. May increase the efficiency of translation by recycling ribosomes from one round of translation to another. This is Ribosome-recycling factor from Psychrobacter arcticus (strain DSM 17307 / VKM B-2377 / 273-4).